The primary structure comprises 296 residues: NmrA-like family domain-containing protein 1 (296 aa).

NADP(+) contacts are provided by residues 11-16 (GATGAQ), 37-41 (RSPGR), 58-59 (DQ), 79-81 (TNF), Lys-133, and 155-158 (YYEN).

It belongs to the NmrA-type oxidoreductase family. Homodimer.

The protein localises to the cytoplasm. It localises to the perinuclear region. The protein resides in the nucleus. Redox sensor protein. Undergoes restructuring and subcellular redistribution in response to changes in intracellular NADPH/NADP(+) levels. The protein is NmrA-like family domain-containing protein 1 (NMRAL1) of Gallus gallus (Chicken).